We begin with the raw amino-acid sequence, 547 residues long: T-complex protein 1 subunit alpha (547 aa).

This sequence belongs to the TCP-1 chaperonin family. In terms of assembly, heterooligomeric complex of about 850 to 900 kDa that forms two stacked rings, 12 to 16 nm in diameter.

It localises to the cytoplasm. Its function is as follows. Molecular chaperone; assists the folding of proteins upon ATP hydrolysis. Known to play a role, in vitro, in the folding of actin and tubulin. This is T-complex protein 1 subunit alpha from Tetrahymena pyriformis.